A 602-amino-acid chain; its full sequence is Potassium voltage-gated channel subfamily A member 5 (602 aa).

Residues 1–107 form a disordered region; that stretch reads MEISLVPMEN…EDQAPQDSGS (107 aa). Positions 1-202 are tetramerization domain; the sequence is MEISLVPMEN…FYQLGDEAME (202 aa). Residues 1 to 238 lie on the Cytoplasmic side of the membrane; the sequence is MEISLVPMEN…LIFEYPESSG (238 aa). The span at 66 to 78 shows a compositional bias: pro residues; sequence PLPPMPQELPQPR. At Ser81 the chain carries Phosphoserine; by CK2 and PKA. Lys212 participates in a covalent cross-link: Glycyl lysine isopeptide (Lys-Gly) (interchain with G-Cter in SUMO). Residues 239-260 form a helical membrane-spanning segment; that stretch reads SARAIAIVSVLVILISIITFCL. At 261 to 314 the chain is on the extracellular side; that stretch reads ETLPEFRDERELLRHPPVPPQPPAPAPGANGSGSGVLSSGPTVAPLLPRTLADP. Residues 274 to 297 are disordered; that stretch reads RHPPVPPQPPAPAPGANGSGSGVL. Residues 276-286 are compositionally biased toward pro residues; the sequence is PPVPPQPPAPA. N-linked (GlcNAc...) asparagine glycosylation is present at Asn290. A helical transmembrane segment spans residues 315–336; sequence FFIVETTCVIWFTFELLVRFFA. A lipid anchor (S-palmitoyl cysteine) is attached at Cys337. At 337–347 the chain is on the cytoplasmic side; that stretch reads CPSKAEFSRNI. Residues 348–368 form a helical membrane-spanning segment; it reads MNIIDIVAIFPYFITLGTELA. At 369–384 the chain is on the extracellular side; it reads EQQPGGGGQNGQQAMS. Residues 385–405 form a helical; Voltage-sensor membrane-spanning segment; sequence LAILRVIRLVRVFRIFKLSRH. The Cytoplasmic portion of the chain corresponds to 406 to 420; the sequence is SKGLQILGKTLQASM. The segment at 407-420 is S4-S5 linker; it reads KGLQILGKTLQASM. Residues 421 to 442 traverse the membrane as a helical segment; it reads RELGLLIFFLFIGVILFSSAVY. Over 443–456 the chain is Extracellular; that stretch reads FAEADNQGSHFSSI. Positions 457–468 form an intramembrane region, helical; it reads PDAFWWAVVTMT. A Selectivity filter motif is present at residues 469–474; the sequence is TVGYGD. Residues 469–476 lie within the membrane without spanning it; sequence TVGYGDMR. The Extracellular portion of the chain corresponds to 477–483; the sequence is PITVGGK. The helical transmembrane segment at 484–512 threads the bilayer; it reads IVGSLCAIAGVLTIALPVPVIVSNFNYFY. Residues 513-602 are Cytoplasmic-facing; that stretch reads HRETDHEEQA…CLDTSRETDL (90 aa). Residue Lys525 forms a Glycyl lysine isopeptide (Lys-Gly) (interchain with G-Cter in SUMO) linkage. 3 positions are modified to phosphoserine; by PKA: Ser535, Ser546, and Ser569. Residues 600–602 carry the PDZ-binding motif; the sequence is TDL.

This sequence belongs to the potassium channel family. A (Shaker) (TC 1.A.1.2) subfamily. Kv1.5/KCNA5 sub-subfamily. In terms of assembly, homotetramer and heterotetramer of potassium channel proteins. Interacts with DLG1, which enhances channel currents. Forms a ternary complex with DLG1 and CAV3. Interacts with KCNAB1. Interacts with UBE2I. Interacts with XIRP2; the interaction is required for normal action potential configuration in the heart. Glycosylated. Post-translationally, sumoylated on Lys-212, and Lys-525, preferentially with SUMO3. Sumoylation regulates the voltage sensitivity of the channel. As to expression, expressed in the heart (at protein level). Expressed in the brain and weakly expressed in the thymus, skeletal muscle and spleen.

It is found in the cell membrane. It catalyses the reaction K(+)(in) = K(+)(out). Voltage-gated potassium channel that mediates transmembrane potassium transport in excitable membranes. Forms tetrameric potassium-selective channels through which potassium ions pass in accordance with their electrochemical gradient. The channel alternates between opened and closed conformations in response to the voltage difference across the membrane. Can form functional homotetrameric channels and heterotetrameric channels that contain variable proportions of KCNA1, KCNA2, KCNA4, KCNA5, and possibly other family members as well; channel properties depend on the type of alpha subunits that are part of the channel. Channel properties are modulated by cytoplasmic beta subunits that regulate the subcellular location of the alpha subunits and promote rapid inactivation. Homotetrameric channels display rapid activation and slow inactivation. Required for normal electrical conduction including formation of the infranodal ventricular conduction system and normal action potential configuration, as a result of its interaction with XIRP2. May play a role in regulating the secretion of insulin in normal pancreatic islets. Its function is as follows. Voltage-gated potassium channel that mediates transmembrane potassium transport in excitable membranes. Forms tetrameric potassium-selective channels through which potassium ions pass in accordance with their electrochemical gradient. The channel alternates between opened and closed conformations in response to the voltage difference across the membrane. In terms of biological role, inactive. Inhibits expression of isoform 1 and isoform 2. The sequence is that of Potassium voltage-gated channel subfamily A member 5 (Kcna5) from Mus musculus (Mouse).